Reading from the N-terminus, the 812-residue chain is Lon protease (812 aa).

Residues Tyr22–Ile215 enclose the Lon N-terminal domain. Gly367–Thr374 contributes to the ATP binding site. Residues Glu602–Arg783 enclose the Lon proteolytic domain. Active-site residues include Ser689 and Lys732. The disordered stretch occupies residues Pro787–His812.

It belongs to the peptidase S16 family. In terms of assembly, homohexamer. Organized in a ring with a central cavity.

The protein resides in the cytoplasm. It catalyses the reaction Hydrolysis of proteins in presence of ATP.. Functionally, ATP-dependent serine protease that mediates the selective degradation of mutant and abnormal proteins as well as certain short-lived regulatory proteins. Required for cellular homeostasis and for survival from DNA damage and developmental changes induced by stress. Degrades polypeptides processively to yield small peptide fragments that are 5 to 10 amino acids long. Binds to DNA in a double-stranded, site-specific manner. Required for wild-type virulence during the initial stages of infection in the mouse model, but not essential for the establishment and maintenance of chronic infection in this host. The protein is Lon protease of Brucella abortus (strain 2308).